Here is a 354-residue protein sequence, read N- to C-terminus: Divinyl chlorophyll a/b light-harvesting protein PcbG (354 aa).

The next 6 membrane-spanning stretches (helical) occupy residues 27–47, 65–85, 88–108, 201–221, 241–261, and 308–328; these read FIAA…ASTL, IFLA…VWTG, VASV…GALS, VLGG…FHIA, AVLS…AFWC, and LTNV…WHAI.

It belongs to the PsbB/PsbC family. IsiA/Pcb subfamily. In terms of assembly, the antenna complex consists of divinyl chlorophylls (a and b) and divinyl chlorophyll a/b binding proteins and binds more divinyl chlorophyll b than does the antenna complex from high-light-adapted Prochlorococcus. It depends on divinyl chlorophyll a as a cofactor. Divinyl chlorophyll b serves as cofactor.

It localises to the cellular thylakoid membrane. The antenna complex functions as a light receptor, it captures and delivers excitation energy to photosystems II and I. The Prochlorales pcb genes are not related to higher plant LHCs. The sequence is that of Divinyl chlorophyll a/b light-harvesting protein PcbG (pcbG) from Prochlorococcus marinus (strain NATL2A).